The chain runs to 545 residues: CTP synthase (545 aa).

The tract at residues 1 to 266 (MTKNYIFITG…DDYICNYFKL (266 aa)) is amidoligase domain. S14 lines the CTP pocket. S14 is a UTP binding site. ATP contacts are provided by residues 15–20 (SLGKGI) and D72. D72 and E140 together coordinate Mg(2+). CTP-binding positions include 147 to 149 (DIE), 187 to 192 (KTKPTQ), and K223. Residues 187–192 (KTKPTQ) and K223 contribute to the UTP site. 239 to 241 (KDV) contacts ATP. The Glutamine amidotransferase type-1 domain occupies 291 to 543 (VIGIIGKYIK…IKSAGKHKKN (253 aa)). G352 lines the L-glutamine pocket. The active-site Nucleophile; for glutamine hydrolysis is C379. Residues 380–383 (LGMQ), E403, and R471 each bind L-glutamine. Residues H516 and E518 contribute to the active site.

This sequence belongs to the CTP synthase family. Homotetramer.

The catalysed reaction is UTP + L-glutamine + ATP + H2O = CTP + L-glutamate + ADP + phosphate + 2 H(+). The enzyme catalyses L-glutamine + H2O = L-glutamate + NH4(+). It catalyses the reaction UTP + NH4(+) + ATP = CTP + ADP + phosphate + 2 H(+). It functions in the pathway pyrimidine metabolism; CTP biosynthesis via de novo pathway; CTP from UDP: step 2/2. Its activity is regulated as follows. Allosterically activated by GTP, when glutamine is the substrate; GTP has no effect on the reaction when ammonia is the substrate. The allosteric effector GTP functions by stabilizing the protein conformation that binds the tetrahedral intermediate(s) formed during glutamine hydrolysis. Inhibited by the product CTP, via allosteric rather than competitive inhibition. In terms of biological role, catalyzes the ATP-dependent amination of UTP to CTP with either L-glutamine or ammonia as the source of nitrogen. Regulates intracellular CTP levels through interactions with the four ribonucleotide triphosphates. This is CTP synthase from Buchnera aphidicola subsp. Acyrthosiphon pisum (strain 5A).